The primary structure comprises 185 residues: Acireductone dioxygenase (185 aa).

Residues His96, His98, Glu102, and His140 each contribute to the Fe(2+) site. Ni(2+) contacts are provided by His96, His98, Glu102, and His140.

This sequence belongs to the acireductone dioxygenase (ARD) family. As to quaternary structure, monomer. Fe(2+) is required as a cofactor. The cofactor is Ni(2+).

The catalysed reaction is 1,2-dihydroxy-5-(methylsulfanyl)pent-1-en-3-one + O2 = 3-(methylsulfanyl)propanoate + CO + formate + 2 H(+). The enzyme catalyses 1,2-dihydroxy-5-(methylsulfanyl)pent-1-en-3-one + O2 = 4-methylsulfanyl-2-oxobutanoate + formate + 2 H(+). The protein operates within amino-acid biosynthesis; L-methionine biosynthesis via salvage pathway; L-methionine from S-methyl-5-thio-alpha-D-ribose 1-phosphate: step 5/6. Catalyzes 2 different reactions between oxygen and the acireductone 1,2-dihydroxy-3-keto-5-methylthiopentene (DHK-MTPene) depending upon the metal bound in the active site. Fe-containing acireductone dioxygenase (Fe-ARD) produces formate and 2-keto-4-methylthiobutyrate (KMTB), the alpha-ketoacid precursor of methionine in the methionine recycle pathway. Ni-containing acireductone dioxygenase (Ni-ARD) produces methylthiopropionate, carbon monoxide and formate, and does not lie on the methionine recycle pathway. In Hahella chejuensis (strain KCTC 2396), this protein is Acireductone dioxygenase.